The following is a 310-amino-acid chain: Phosphoribosylaminoimidazole-succinocarboxamide synthase (310 aa).

The protein belongs to the SAICAR synthetase family.

It catalyses the reaction 5-amino-1-(5-phospho-D-ribosyl)imidazole-4-carboxylate + L-aspartate + ATP = (2S)-2-[5-amino-1-(5-phospho-beta-D-ribosyl)imidazole-4-carboxamido]succinate + ADP + phosphate + 2 H(+). Its pathway is purine metabolism; IMP biosynthesis via de novo pathway; 5-amino-1-(5-phospho-D-ribosyl)imidazole-4-carboxamide from 5-amino-1-(5-phospho-D-ribosyl)imidazole-4-carboxylate: step 1/2. The chain is Phosphoribosylaminoimidazole-succinocarboxamide synthase from Dechloromonas aromatica (strain RCB).